The following is a 686-amino-acid chain: U3 small nucleolar RNA-associated protein 4 homolog (686 aa).

14 WD repeats span residues 7 to 50 (HRVR…ANYF), 51 to 92 (QEKF…QALN), 93 to 135 (IKYA…PDKI), 136 to 181 (QFER…AVHK), 182 to 226 (MIVD…SATG), 227 to 275 (TLVK…SSEK), 276 to 317 (QWVR…LMEK), 318 to 377 (VEVK…PLSK), 378 to 427 (NADH…NISL), 428 to 475 (KRVS…KHLH), 476 to 516 (AFQP…VKQL), 517 to 566 (KLHC…WSRT), 567 to 627 (VQKQ…FPPT), and 628 to 666 (NESD…AVER). A Glycyl lysine isopeptide (Lys-Gly) (interchain with G-Cter in SUMO2) cross-link involves residue lysine 321.

As to quaternary structure, interacts with HIVEP1 Interacts with NOL11. Part of the small subunit (SSU) processome, composed of more than 70 proteins and the RNA chaperone small nucleolar RNA (snoRNA) U3. May be a component of the proposed t-UTP subcomplex of the ribosomal small subunit (SSU) processome containing at least UTP4, WDR43, HEATR1, UTP15, WDR75. In terms of processing, may be phosphorylated during mitosis; may control the association of this protein with WRD43 and UTP15.

The protein localises to the nucleus. It localises to the nucleolus. The protein resides in the chromosome. Functionally, ribosome biogenesis factor. Involved in nucleolar processing of pre-18S ribosomal RNA. Part of the small subunit (SSU) processome, first precursor of the small eukaryotic ribosomal subunit. During the assembly of the SSU processome in the nucleolus, many ribosome biogenesis factors, an RNA chaperone and ribosomal proteins associate with the nascent pre-rRNA and work in concert to generate RNA folding, modifications, rearrangements and cleavage as well as targeted d Involved in SSU pre-rRNA processing at sites A', A0, 1 and 2b. Required for optimal pre-ribosomal RNA transcription by RNA polymerase. May be a transcriptional regulator. Its function is as follows. (Microbial infection) Acts as a positive regulator of HIVEP1 which specifically binds to the DNA sequence 5'-GGGACTTTCC-3' found in enhancer elements of numerous viral promoters such as those of HIV-1, SV40, or CMV. In Homo sapiens (Human), this protein is U3 small nucleolar RNA-associated protein 4 homolog.